The chain runs to 212 residues: B3 domain-containing protein Os04g0386900 (212 aa).

A disordered region spans residues methionine 1–lysine 78. Composition is skewed to low complexity over residues proline 8 to proline 23 and aspartate 36 to aspartate 46. Residues phenylalanine 93 to glutamate 191 constitute a DNA-binding region (TF-B3).

Its subcellular location is the nucleus. The polypeptide is B3 domain-containing protein Os04g0386900 (Oryza sativa subsp. japonica (Rice)).